The chain runs to 640 residues: MEPPFFLLLLLLVVSSSSPSAALLSAKGVNNEVQALIVIKNLLKDPHGVLKSWDQNSVDPCSWAMITCSPDFLVTGLEAPSQHLSGLLSPSIGNLTNLETVLLQNNNITGPIPAEIGRLENLKTLDLSSNSFYGEIPSSVGHLESLQYLRLNNNTLSGPFPSASANLSHLVFLDLSYNNLSGPIPESLARTYNIVGNPLICDANREQDCYGTAPMPMSYSLNGSRGGALPPAARDRGHKFAVAFGSTAGCMGLLLLAAGFLFWWRHRRNRQILFDVDEQQIENVNLGNVKRFSFRELQAATEGFSGKNILGKGGFGNVYRGQLPDGTLVAVKRLKDGNAAGGEAQFQTEVEMISLALHRNLLRLYGFCMTATERLLVYPFMSNGSVASRLKAKPALEWGTRRRIAVGAARGLVYLHEQCDPKIIHRDVKAANVLLDEACEAVVGDFGLAKLLDHRESHVTTAVRGTVGHIAPEYLSTGQSSDRTDVFGFGILLLELVTGQTALEFGKSSNHKGAMLDWVKKMQSEKKVEVLVDKGLGGGYDRVEVEEMVQVALLCTQYLPAHRPRMSDVVRMLEGDGLADRWEKASGHSTAAADSLSHSHRTSDPAPPAADFAAAFGRCFSDLTDDSSLLVQAVELSGPR.

The signal sequence occupies residues 1 to 22 (MEPPFFLLLLLLVVSSSSPSAA). Topologically, residues 23–241 (LLSAKGVNNE…AARDRGHKFA (219 aa)) are extracellular. N94 and N107 each carry an N-linked (GlcNAc...) asparagine glycan. 4 LRR repeats span residues 95-119 (LTNL…IGRL), 120-143 (ENLK…VGHL), 145-167 (SLQY…SANL), and 168-191 (SHLV…LART). 4 N-linked (GlcNAc...) asparagine glycosylation sites follow: N153, N166, N179, and N222. A helical transmembrane segment spans residues 242-262 (VAFGSTAGCMGLLLLAAGFLF). At 263–640 (WWRHRRNRQI…VQAVELSGPR (378 aa)) the chain is on the cytoplasmic side. Residues 304–583 (FSGKNILGKG…EGDGLADRWE (280 aa)) form the Protein kinase domain. ATP-binding positions include 310-318 (LGKGGFGNV) and K332. D427 functions as the Proton acceptor in the catalytic mechanism.

The protein belongs to the protein kinase superfamily. Ser/Thr protein kinase family. Interacts with MSBP1.

It is found in the cell membrane. It catalyses the reaction L-seryl-[protein] + ATP = O-phospho-L-seryl-[protein] + ADP + H(+). It carries out the reaction L-threonyl-[protein] + ATP = O-phospho-L-threonyl-[protein] + ADP + H(+). Functionally, LRR receptor kinase that may be involved in defense response. This Oryza sativa subsp. japonica (Rice) protein is LRR receptor kinase SERL2.